The sequence spans 24 residues: RuBisCO large subunit-binding protein subunit beta, chloroplastic (24 aa).

This sequence belongs to the chaperonin (HSP60) family. Oligomer of probably six alpha and six beta subunits.

It is found in the plastid. The protein localises to the chloroplast. Its function is as follows. This protein binds RuBisCO small and large subunits and is implicated in the assembly of the enzyme oligomer. This is RuBisCO large subunit-binding protein subunit beta, chloroplastic from Populus euphratica (Euphrates poplar).